Consider the following 1151-residue polypeptide: Error-prone DNA polymerase (1151 aa).

The tract at residues 1108–1151 (HPVPSGDALIEPLNDDRRDHADAPAQKIRHPRNVRILPPSRDFH) is disordered.

Belongs to the DNA polymerase type-C family. DnaE2 subfamily.

The protein localises to the cytoplasm. It catalyses the reaction DNA(n) + a 2'-deoxyribonucleoside 5'-triphosphate = DNA(n+1) + diphosphate. In terms of biological role, DNA polymerase involved in damage-induced mutagenesis and translesion synthesis (TLS). It is not the major replicative DNA polymerase. In Bradyrhizobium diazoefficiens (strain JCM 10833 / BCRC 13528 / IAM 13628 / NBRC 14792 / USDA 110), this protein is Error-prone DNA polymerase.